The chain runs to 385 residues: Glucans biosynthesis protein C (385 aa).

The next 10 helical transmembrane spans lie at 17-37, 60-80, 91-111, 137-157, 173-193, 212-232, 239-259, 274-294, 311-331, and 338-358; these read AWLM…SHTW, MQVF…RYPL, VGIP…IMLQ, ISHL…VWIF, KFSM…YAVI, FIVM…LAFI, LFTT…VAYL, TESV…FSFG, ASLF…AYIT, and WLGF…LYEI.

It belongs to the acyltransferase 3 family. OpgC subfamily.

The protein resides in the cell membrane. It participates in glycan metabolism; osmoregulated periplasmic glucan (OPG) biosynthesis. Functionally, necessary for the succinyl substitution of periplasmic glucans. Could catalyze the transfer of succinyl residues from the cytoplasmic side of the membrane to the nascent glucan backbones on the periplasmic side of the membrane. This chain is Glucans biosynthesis protein C, found in Escherichia coli (strain SMS-3-5 / SECEC).